Consider the following 168-residue polypeptide: Phosphopantetheine adenylyltransferase (168 aa).

T10 lines the substrate pocket. Residues 10-11 and H18 contribute to the ATP site; that span reads TF. Residues K42, L74, and R88 each contribute to the substrate site. ATP-binding positions include 89 to 91, E99, and 124 to 130; these read GLR and NSFISST.

Belongs to the bacterial CoaD family. As to quaternary structure, homohexamer. Requires Mg(2+) as cofactor.

It is found in the cytoplasm. The catalysed reaction is (R)-4'-phosphopantetheine + ATP + H(+) = 3'-dephospho-CoA + diphosphate. The protein operates within cofactor biosynthesis; coenzyme A biosynthesis; CoA from (R)-pantothenate: step 4/5. Functionally, reversibly transfers an adenylyl group from ATP to 4'-phosphopantetheine, yielding dephospho-CoA (dPCoA) and pyrophosphate. The polypeptide is Phosphopantetheine adenylyltransferase (Shewanella denitrificans (strain OS217 / ATCC BAA-1090 / DSM 15013)).